The following is a 122-amino-acid chain: UPF0382 membrane protein SERP0230 (122 aa).

A run of 4 helical transmembrane segments spans residues 3 to 23 (VFII…AFGA), 46 to 66 (MYHG…SINV), 69 to 89 (AGWL…FLAL), and 98 to 118 (ITPI…IATL).

Belongs to the UPF0382 family.

The protein localises to the cell membrane. This chain is UPF0382 membrane protein SERP0230, found in Staphylococcus epidermidis (strain ATCC 35984 / DSM 28319 / BCRC 17069 / CCUG 31568 / BM 3577 / RP62A).